The sequence spans 83 residues: UPF0298 protein SERP0712 (83 aa).

It belongs to the UPF0298 family.

The protein resides in the cytoplasm. The chain is UPF0298 protein SERP0712 from Staphylococcus epidermidis (strain ATCC 35984 / DSM 28319 / BCRC 17069 / CCUG 31568 / BM 3577 / RP62A).